Here is a 404-residue protein sequence, read N- to C-terminus: Omega-3 fatty acid desaturase, chloroplastic (404 aa).

The interval 28–50 is disordered; the sequence is TVDSSSSPPIEEEPKTQRFDPGA. A Histidine box-1 motif is present at residues 121 to 125; it reads HDCGH. Residues 157-161 carry the Histidine box-2 motif; that stretch reads HRTHH. Positions 324 to 328 match the Histidine box-3 motif; the sequence is HVIHH.

It belongs to the fatty acid desaturase type 1 family.

It localises to the plastid. It is found in the chloroplast membrane. The protein operates within lipid metabolism; polyunsaturated fatty acid biosynthesis. Chloroplast omega-3 fatty acid desaturase introduces the third double bond in the biosynthesis of 16:3 and 18:3 fatty acids, important constituents of plant membranes. It is thought to use ferredoxin as an electron donor and to act on fatty acids esterified to galactolipids, sulfolipids and phosphatidylglycerol. In Brassica napus (Rape), this protein is Omega-3 fatty acid desaturase, chloroplastic (FAD7).